The sequence spans 625 residues: Probable thymidylate synthase (625 aa).

A disordered region spans residues 224 to 323 (AVKNIDGQDD…PEPPVPFTSS (100 aa)). Residues 243–257 (EEYDDDDDDDVDDNE) are compositionally biased toward acidic residues. Composition is skewed to polar residues over residues 258-269 (QSNSMIETSANA) and 293-312 (SQAPLGSESVDTQASENVTT). DUMP-binding positions include R350 and 477–478 (RR). Residue C497 is the Nucleophile of the active site. DUMP is bound by residues 524 to 527 (RSAD), N535, and 565 to 567 (HIY). Residue D527 participates in (6R)-5,10-methylene-5,6,7,8-tetrahydrofolate binding.

It in the N-terminal section; belongs to the HFCD (homo-oligomeric flavin containing Cys decarboxylase) superfamily. This sequence in the C-terminal section; belongs to the thymidylate synthase family.

Its subcellular location is the cytoplasm. The enzyme catalyses dUMP + (6R)-5,10-methylene-5,6,7,8-tetrahydrofolate = 7,8-dihydrofolate + dTMP. The protein operates within pyrimidine metabolism; dTTP biosynthesis. In terms of biological role, required for both nuclear and mitochondrial DNA synthesis. The protein is Probable thymidylate synthase of Schizosaccharomyces pombe (strain 972 / ATCC 24843) (Fission yeast).